The following is a 162-amino-acid chain: Globin CTT-VI (162 aa).

A signal peptide spans Met-1 to Ala-15. The region spanning Val-17–Asp-161 is the Globin domain. Heme b is bound by residues His-75 and His-110.

Belongs to the globin family. Homodimer.

In Chironomus thummi thummi (Midge), this protein is Globin CTT-VI (CTT-6).